The primary structure comprises 325 residues: Probable cell division protein WhiA (325 aa).

A DNA-binding region (H-T-H motif) is located at residues 273–306; it reads SLEELGRLADPPMTKDAVAGRIRRLLSMADRKAK.

This sequence belongs to the WhiA family.

Functionally, involved in cell division and chromosome segregation. The sequence is that of Probable cell division protein WhiA from Mycobacterium bovis (strain BCG / Tokyo 172 / ATCC 35737 / TMC 1019).